Consider the following 384-residue polypeptide: MKRRHWSHPSCGLLLLVAVFCLLLVFRCSQLRHSGDGAAAAAPDGGAGRNDGDDVDERLVELAAVDPAAMAVLQAAKRLLEGNLARAPERHRDVALRGLREWVGKQERFDPGVMSELVELIKRPIDRYNGDGGGGGEGEGRRYASCAVVGNSGILLAAEHGELIDGHELVVRLNNAPAGDGRYARHVGARTGLAFLNSNVLSQCAVPRRGACFCRAYGEGVPILTYMCNAAHFVEHAVCNNASSSSSGAADATAAAPVIVTDPRLDALCARIVKYYSLRRFARETGRPAEEWARRHEEGMFHYSSGMQAVVAAAGVCDRVSVFGFGKDASARHHYHTLQRRELDLHDYEAEYEFYRDLESRPEAIPFLRQRDSGFRLPPVSFYR.

The Cytoplasmic segment spans residues 1 to 5; the sequence is MKRRH. A helical; Signal-anchor for type II membrane protein membrane pass occupies residues 6-26; that stretch reads WSHPSCGLLLLVAVFCLLLVF. Residues 27 to 384 are Lumenal-facing; it reads RCSQLRHSGD…FRLPPVSFYR (358 aa). Residue N241 is glycosylated (N-linked (GlcNAc...) asparagine).

It belongs to the glycosyltransferase 29 family.

It localises to the golgi apparatus membrane. Possesses sialyltransferase-like activity in vitro. Transfers sialic acid to the glycoprotein asialofetuin. The transferred sialic acid is linked to galactose of Gal-beta-1,3-GalNAc through alpha-2,6-linkage. The sequence is that of Sialyltransferase-like protein 3 from Oryza sativa subsp. indica (Rice).